The chain runs to 331 residues: UPF0329 protein ECU01_0080/ECU01_1530/ECU02_1560/ECU04_0090/ECU08_0010/ECU08_2090 (331 aa).

The span at 305–320 (QRSEMEKRDREQDPER) shows a compositional bias: basic and acidic residues. The disordered stretch occupies residues 305–331 (QRSEMEKRDREQDPERRRLRARRVGSL). The span at 321–331 (RRLRARRVGSL) shows a compositional bias: basic residues.

Belongs to the UPF0329 family.

The protein is UPF0329 protein ECU01_0080/ECU01_1530/ECU02_1560/ECU04_0090/ECU08_0010/ECU08_2090 of Encephalitozoon cuniculi (strain GB-M1) (Microsporidian parasite).